Consider the following 244-residue polypeptide: L-xylulose reductase (244 aa).

Met-1 carries the post-translational modification N-acetylmethionine. 11 to 39 (LVTGAGKGIGRSTVLALKAAGAQVVAVSR) provides a ligand contact to NADP(+). The residue at position 21 (Arg-21) is an Omega-N-methylarginine. Substrate is bound at residue Ser-136. The active-site Proton acceptor is Tyr-149. Residue Lys-153 is part of the active site.

This sequence belongs to the short-chain dehydrogenases/reductases (SDR) family. In terms of assembly, homotetramer. As to expression, highly expressed in kidney and liver. Expressed in epididymis. Expressed at intermediate level in lung. Weakly expressed in brain, heart, spleen and testis.

The protein resides in the membrane. The catalysed reaction is xylitol + NADP(+) = L-xylulose + NADPH + H(+). Catalyzes the NADPH-dependent reduction of several pentoses, tetroses, trioses, alpha-dicarbonyl compounds and L-xylulose. Participates in the uronate cycle of glucose metabolism. May play a role in the water absorption and cellular osmoregulation in the proximal renal tubules by producing xylitol, an osmolyte, thereby preventing osmolytic stress from occurring in the renal tubules. This Cavia porcellus (Guinea pig) protein is L-xylulose reductase (DCXR).